A 158-amino-acid polypeptide reads, in one-letter code: Endoribonuclease YbeY (158 aa).

Zn(2+)-binding residues include His119, His123, and His129.

This sequence belongs to the endoribonuclease YbeY family. Zn(2+) serves as cofactor.

It is found in the cytoplasm. Single strand-specific metallo-endoribonuclease involved in late-stage 70S ribosome quality control and in maturation of the 3' terminus of the 16S rRNA. This is Endoribonuclease YbeY from Acinetobacter baumannii (strain ACICU).